The sequence spans 175 residues: Bifunctional protein PyrR (175 aa).

Substrate is bound by residues 40–41 (TR), 102–110 (DDVLYTGRT), arginine 135, and valine 159. The PRPP-binding motif lies at 98–110 (VIIIDDVLYTGRT).

The protein belongs to the purine/pyrimidine phosphoribosyltransferase family. PyrR subfamily. In terms of assembly, homodimer and homohexamer; in equilibrium.

It carries out the reaction UMP + diphosphate = 5-phospho-alpha-D-ribose 1-diphosphate + uracil. Functionally, regulates transcriptional attenuation of the pyrimidine nucleotide (pyr) operon by binding in a uridine-dependent manner to specific sites on pyr mRNA. This disrupts an antiterminator hairpin in the RNA and favors formation of a downstream transcription terminator, leading to a reduced expression of downstream genes. In terms of biological role, also displays a weak uracil phosphoribosyltransferase activity which is not physiologically significant. The sequence is that of Bifunctional protein PyrR from Staphylococcus haemolyticus (strain JCSC1435).